A 263-amino-acid chain; its full sequence is MRQSKKLGQCFLKDKNFVKKAINRAEITNKDVVLELGLGEGALTKELAKIAKKVYVIELDERLKPFADEITSEFENVEIIWSDALKVDLKNLGFNKIVANLPYQISSPITFKFLDVDFETAVLMYQYEFAKRMAGKPDTKEYSRLSVAVQYNADVEFICKVPPSAFSPKPDVNSAIVKLTKREPKYFVKDEKFFKKVLKAMFQHRNRTIKRALIDSSHEIEIDRDNLKEILEKVESEFDFSERVFKTSPEKIGYLSNLLYDEI.

Positions 12, 37, 58, 83, and 100 each coordinate S-adenosyl-L-methionine.

It belongs to the class I-like SAM-binding methyltransferase superfamily. rRNA adenine N(6)-methyltransferase family. RsmA subfamily.

It localises to the cytoplasm. Specifically dimethylates two adjacent adenosines in the loop of a conserved hairpin near the 3'-end of 16S rRNA in the 30S particle. May play a critical role in biogenesis of 30S subunits. This chain is Probable ribosomal RNA small subunit methyltransferase A, found in Methanococcus maripaludis (strain C5 / ATCC BAA-1333).